A 104-amino-acid polypeptide reads, in one-letter code: Large ribosomal subunit protein uL24 (104 aa).

Belongs to the universal ribosomal protein uL24 family. In terms of assembly, part of the 50S ribosomal subunit.

Functionally, one of two assembly initiator proteins, it binds directly to the 5'-end of the 23S rRNA, where it nucleates assembly of the 50S subunit. Its function is as follows. One of the proteins that surrounds the polypeptide exit tunnel on the outside of the subunit. This Methylorubrum populi (strain ATCC BAA-705 / NCIMB 13946 / BJ001) (Methylobacterium populi) protein is Large ribosomal subunit protein uL24.